The chain runs to 157 residues: Small ribosomal subunit protein uS7 (157 aa).

The protein belongs to the universal ribosomal protein uS7 family. In terms of assembly, part of the 30S ribosomal subunit. Contacts proteins S9 and S11.

Its function is as follows. One of the primary rRNA binding proteins, it binds directly to 16S rRNA where it nucleates assembly of the head domain of the 30S subunit. Is located at the subunit interface close to the decoding center, probably blocks exit of the E-site tRNA. The protein is Small ribosomal subunit protein uS7 of Chlamydia pneumoniae (Chlamydophila pneumoniae).